Here is a 377-residue protein sequence, read N- to C-terminus: Carbamoyl phosphate synthase small chain (377 aa).

The interval 1–186 is CPSase; the sequence is MNTPALLVLA…LGKGFVTPDK (186 aa). Residues Ser47, Gly238, and Gly240 each coordinate L-glutamine. The region spanning 190–377 is the Glutamine amidotransferase type-1 domain; that stretch reads HVVAYDFGVK…IGNMKAAKQA (188 aa). Cys266 functions as the Nucleophile in the catalytic mechanism. Positions 267, 270, 308, 310, and 311 each coordinate L-glutamine. Active-site residues include His350 and Glu352.

This sequence belongs to the CarA family. Composed of two chains; the small (or glutamine) chain promotes the hydrolysis of glutamine to ammonia, which is used by the large (or ammonia) chain to synthesize carbamoyl phosphate. Tetramer of heterodimers (alpha,beta)4.

It carries out the reaction hydrogencarbonate + L-glutamine + 2 ATP + H2O = carbamoyl phosphate + L-glutamate + 2 ADP + phosphate + 2 H(+). The enzyme catalyses L-glutamine + H2O = L-glutamate + NH4(+). Its pathway is amino-acid biosynthesis; L-arginine biosynthesis; carbamoyl phosphate from bicarbonate: step 1/1. It participates in pyrimidine metabolism; UMP biosynthesis via de novo pathway; (S)-dihydroorotate from bicarbonate: step 1/3. Its function is as follows. Small subunit of the glutamine-dependent carbamoyl phosphate synthetase (CPSase). CPSase catalyzes the formation of carbamoyl phosphate from the ammonia moiety of glutamine, carbonate, and phosphate donated by ATP, constituting the first step of 2 biosynthetic pathways, one leading to arginine and/or urea and the other to pyrimidine nucleotides. The small subunit (glutamine amidotransferase) binds and cleaves glutamine to supply the large subunit with the substrate ammonia. This is Carbamoyl phosphate synthase small chain from Neisseria gonorrhoeae.